Reading from the N-terminus, the 304-residue chain is Opsin-1 (304 aa).

Residues 1-45 (MIHPEQVADMLRPTTSTTSSHVPGPVPTVVPTPTEYQTLGETGHR) are Extracellular-facing. Residues 46–66 (TLWVTFALMVLSSGIFALLSW) traverse the membrane as a helical segment. Residues 74-94 (LFHVITTLITVVASLSYFAMA) form a helical membrane-spanning segment. The helical transmembrane segment at 129-149 (YVDWALTTPLLLLELCLLAGV) threads the bilayer. A helical membrane pass occupies residues 154-174 (TLMAIVADVIMVLCGLFAALG). A helical membrane pass occupies residues 183 to 203 (WGWYTIGCFSYLFVIWHVALH). The chain crosses the membrane as a helical span at residues 219-239 (FTGLAVFALLLWTAYPIIWGI). Residues 252–272 (ILIYTVLDLLAKPVFGFWLLL) form a helical membrane-spanning segment. An N6-(retinylidene)lysine modification is found at Lys-263. The Cytoplasmic portion of the chain corresponds to 273–304 (SHRAMPETNIDLPGYWSHGLATEGRIRIGEED).

Belongs to the archaeal/bacterial/fungal opsin family. Post-translationally, binds all-trans retinal via a protonated Schiff base linkage.

Its subcellular location is the membrane. Functionally, could facilitate a sensory photoresponse. This is Opsin-1 (nop-1) from Neurospora crassa (strain ATCC 24698 / 74-OR23-1A / CBS 708.71 / DSM 1257 / FGSC 987).